Reading from the N-terminus, the 202-residue chain is uncharacterized protein (202 aa).

The protein belongs to the dienelactone hydrolase family.

This is an uncharacterized protein from Bacillus subtilis (strain 168).